Reading from the N-terminus, the 180-residue chain is Translation initiation factor IF-3 (180 aa).

This sequence belongs to the IF-3 family. In terms of assembly, monomer.

It localises to the cytoplasm. In terms of biological role, IF-3 binds to the 30S ribosomal subunit and shifts the equilibrium between 70S ribosomes and their 50S and 30S subunits in favor of the free subunits, thus enhancing the availability of 30S subunits on which protein synthesis initiation begins. The chain is Translation initiation factor IF-3 from Xylella fastidiosa (strain Temecula1 / ATCC 700964).